The primary structure comprises 291 residues: Tyrosine recombinase XerD (291 aa).

Positions 1 to 82 (MEEGLIDRLL…ACKRLYIWME (82 aa)) constitute a Core-binding (CB) domain. The 183-residue stretch at 103 to 285 (NIPTLITEQQ…ANVWLQGVVK (183 aa)) folds into the Tyr recombinase domain. Residues Arg143, Lys167, His237, Arg240, and His263 contribute to the active site. The active-site O-(3'-phospho-DNA)-tyrosine intermediate is Tyr272.

Belongs to the 'phage' integrase family. XerD subfamily. In terms of assembly, forms a cyclic heterotetrameric complex composed of two molecules of XerC and two molecules of XerD.

It is found in the cytoplasm. In terms of biological role, site-specific tyrosine recombinase, which acts by catalyzing the cutting and rejoining of the recombining DNA molecules. The XerC-XerD complex is essential to convert dimers of the bacterial chromosome into monomers to permit their segregation at cell division. It also contributes to the segregational stability of plasmids. In Neisseria meningitidis serogroup B (strain ATCC BAA-335 / MC58), this protein is Tyrosine recombinase XerD.